Reading from the N-terminus, the 357-residue chain is MPGIRLLLAAALLCCPPPAGATSWWSLAQNPVQRPEMYIIGAQPVCSQLSSLSPGQKKLCQLYQDHMMYIGEGAKTGIKECQYQFKQRRWNCSTVDNTSVFGRVMQIGSRETAFTYAVSAAGVVNAISRACREGELSTCGCSRTTRPKDLHRDWLWGGCGDNVDYGYRFAKEFVDAREREKNYPKGSEEQARTLMNLQNNEAGRRAVYKLADAACKCHGVSGSCSLKTCWLQLADFRKVGDHLKEKYDSAAAMRINRKGKLELVNNRFNLPTVEDLVYTDQSPDYCLRNESTGSLGTLGRLCNKTSEGMDGCELMCCGRGYDQFKTVQVERCHCKFHWCCFVKCKKCTEIVDQYVCK.

The signal sequence occupies residues 1–18 (MPGIRLLLAAALLCCPPP). An intrachain disulfide couples Cys-81 to Cys-92. Residues Asn-91 and Asn-97 are each glycosylated (N-linked (GlcNAc...) asparagine). 10 disulfide bridges follow: Cys-131/Cys-139, Cys-141/Cys-159, Cys-215/Cys-229, Cys-217/Cys-224, Cys-286/Cys-317, Cys-302/Cys-312, Cys-316/Cys-356, Cys-332/Cys-347, Cys-334/Cys-344, and Cys-339/Cys-340. Ser-221 is lipidated: O-palmitoleoyl serine; by PORCN. 2 N-linked (GlcNAc...) asparagine glycosylation sites follow: Asn-289 and Asn-303.

The protein belongs to the Wnt family. Post-translationally, palmitoleoylation is required for efficient binding to frizzled receptors. Depalmitoleoylation leads to Wnt signaling pathway inhibition. In terms of tissue distribution, predominantly in neuroectodermal tissues.

It localises to the secreted. Its subcellular location is the extracellular space. The protein resides in the extracellular matrix. Its function is as follows. Ligand for members of the frizzled family of seven transmembrane receptors. Probable developmental protein. May be a signaling molecule which affects the development of discrete regions of tissues. Is likely to signal over only few cell diameters. The sequence is that of Protein Wnt-5b (WNT-5B) from Ambystoma mexicanum (Axolotl).